Here is a 1129-residue protein sequence, read N- to C-terminus: MTSSGKVRIYELSKDLGLENKDVLDAAEKLSIAARSHSSSISETEAGKIRTLLKQGGSPVASAPAKPAPGKAILSVRKASSPAAPSMPSKPAAPAAAKPSPKPSAPSRPEAPLPLIVQKPVSRQAAPQKPVSRQSTPAAAAPAAAPSAPAPSAPTPRPKPTAPKASAPAPTASAPSAPPRPTSARPTPAPARPTGTSPVKRPGSEASSPRPTAPPTRPQPKAPVNRGAPARPAPKPELVGRPQPKRAAPGAPVRQIGQRPGVSPRPSGPPGQRANMPQRPAGSQRPGAPTRPGNAPSKPGQPRSGASSLELVGKPIRRDGSNDGAGGRSDGQGRPPGAPRPGAPRPGGMPGMRKPVAPGELMQLQKPNSRPSAPPPRRVDGTPVATRSGEAAAGGAKATPPVSRPTATPPAAPRRPGFRPGPGAGGQRRPGRPDWDDSAKLEALRSKSPQKQRQKVHIIGENDDALTAETGGFAGERQAMVLSASLARPSKPRTKHKPAPKPVAAIRKRRKETARQRQRRRAMELRAAREAKQVRPEMIVVPEDNLTVQELADMLSIESSEIIKSLFFKGVIATVTQTLDMPTIEAVAQEFGVPVLQDDVEEAAKKTVEMIEEKDHAHLIRRPPVVTVMGHVDHGKTSLLDAIRQARVAAGEAGGITQHIGAYQVEIQHNDSPQRLTFLDTPGHEAFTAMRARGTKVTDVAVLVVAADDGVRPQTLEAISHARAAEVPVVVAINKIDKEGASPDRVKQELSEQNLLAEDWGGDVVMVPVSALRGENIDKLLEMILLVTEVEDLQANPDRLAKGTVIEAHLDKAKGPVATLLVQNGTLRTGDVLAAGPVLGKVRAMVDDGGGRLKEAGPSCAVEALGFSEVPTAGDEFEVYPDEKSARAVVGDRASDARASRLAQQMASRRVSLTAMSGQAKEGELKELNLILKADVQGSVEAILGSLEQLPKDEVQVRVLLSAPGEVTETDVDLAAASGAVIVGFNTSMASGAKRAADANSVDVRDYDVIYKLLEDIQLAMEGLLEPELVEESLGEAEVRAVFTIGKSAVAGCYVTTGKLQRNCKVRVRRGKEIVFAGDLDSLRRNKDDVKDVATGFECGIGCDRFANWKDGDIVEGYKLVTQRRKLAT.

Composition is skewed to low complexity over residues 33–42 (AARSHSSSIS) and 56–99 (GGSP…AAKP). 2 disordered regions span residues 33-462 (AARS…IGEN) and 485-515 (SLAR…ETAR). Residues 100 to 112 (SPKPSAPSRPEAP) are compositionally biased toward pro residues. Residues 135 to 147 (STPAAAAPAAAPS) show a composition bias toward low complexity. Positions 148-161 (APAPSAPTPRPKPT) are enriched in pro residues. Low complexity predominate over residues 162–175 (APKASAPAPTASAP). Composition is skewed to pro residues over residues 176-191 (SAPP…PAPA) and 211-221 (PTAPPTRPQPK). A compositionally biased stretch (low complexity) spans 257–273 (GQRPGVSPRPSGPPGQR). The segment covering 431–445 (GRPDWDDSAKLEALR) has biased composition (basic and acidic residues). Composition is skewed to basic residues over residues 490–499 (SKPRTKHKPA) and 506–515 (IRKRRKETAR). Positions 621 to 793 (RRPPVVTVMG…ILLVTEVEDL (173 aa)) constitute a tr-type G domain. The G1 stretch occupies residues 630–637 (GHVDHGKT). A GTP-binding site is contributed by 630–637 (GHVDHGKT). Positions 655–659 (GITQH) are G2. The segment at 680 to 683 (DTPG) is G3. GTP contacts are provided by residues 680–684 (DTPGH) and 734–737 (NKID). The tract at residues 734-737 (NKID) is G4. A G5 region spans residues 770–772 (SAL).

The protein belongs to the TRAFAC class translation factor GTPase superfamily. Classic translation factor GTPase family. IF-2 subfamily.

It is found in the cytoplasm. Functionally, one of the essential components for the initiation of protein synthesis. Protects formylmethionyl-tRNA from spontaneous hydrolysis and promotes its binding to the 30S ribosomal subunits. Also involved in the hydrolysis of GTP during the formation of the 70S ribosomal complex. In Synechococcus sp. (strain CC9311), this protein is Translation initiation factor IF-2.